Here is a 273-residue protein sequence, read N- to C-terminus: Large ribosomal subunit protein uL2 (273 aa).

Residues 228–273 (VDHPHGGGEGKTSGGRHPVTPWGFPTKGKKTRKNKRTSKFIVKKRK) form a disordered region. The span at 254 to 273 (KGKKTRKNKRTSKFIVKKRK) shows a compositional bias: basic residues.

It belongs to the universal ribosomal protein uL2 family. As to quaternary structure, part of the 50S ribosomal subunit. Forms a bridge to the 30S subunit in the 70S ribosome.

Functionally, one of the primary rRNA binding proteins. Required for association of the 30S and 50S subunits to form the 70S ribosome, for tRNA binding and peptide bond formation. It has been suggested to have peptidyltransferase activity; this is somewhat controversial. Makes several contacts with the 16S rRNA in the 70S ribosome. In Rickettsia akari (strain Hartford), this protein is Large ribosomal subunit protein uL2.